Reading from the N-terminus, the 244-residue chain is Cell division protein ZapD (244 aa).

This sequence belongs to the ZapD family. As to quaternary structure, interacts with FtsZ.

It localises to the cytoplasm. Cell division factor that enhances FtsZ-ring assembly. Directly interacts with FtsZ and promotes bundling of FtsZ protofilaments, with a reduction in FtsZ GTPase activity. The chain is Cell division protein ZapD from Shewanella sp. (strain MR-4).